Reading from the N-terminus, the 198-residue chain is Holliday junction branch migration complex subunit RuvA (198 aa).

The domain I stretch occupies residues 1–64 (MYEYIKGKYI…EDFIGLYGFD (64 aa)). Positions 65–143 (SKEELEMFKL…PDELVDSSLE (79 aa)) are domain II. Positions 144–149 (IDTKDN) are flexible linker. Residues 150–198 (ENVMALSEALSALIALGYSEKEAESVLKKIDKNDSVENIIKNALKALMG) are domain III.

It belongs to the RuvA family. Homotetramer. Forms an RuvA(8)-RuvB(12)-Holliday junction (HJ) complex. HJ DNA is sandwiched between 2 RuvA tetramers; dsDNA enters through RuvA and exits via RuvB. An RuvB hexamer assembles on each DNA strand where it exits the tetramer. Each RuvB hexamer is contacted by two RuvA subunits (via domain III) on 2 adjacent RuvB subunits; this complex drives branch migration. In the full resolvosome a probable DNA-RuvA(4)-RuvB(12)-RuvC(2) complex forms which resolves the HJ.

The protein resides in the cytoplasm. The RuvA-RuvB-RuvC complex processes Holliday junction (HJ) DNA during genetic recombination and DNA repair, while the RuvA-RuvB complex plays an important role in the rescue of blocked DNA replication forks via replication fork reversal (RFR). RuvA specifically binds to HJ cruciform DNA, conferring on it an open structure. The RuvB hexamer acts as an ATP-dependent pump, pulling dsDNA into and through the RuvAB complex. HJ branch migration allows RuvC to scan DNA until it finds its consensus sequence, where it cleaves and resolves the cruciform DNA. This chain is Holliday junction branch migration complex subunit RuvA, found in Clostridium beijerinckii (strain ATCC 51743 / NCIMB 8052) (Clostridium acetobutylicum).